We begin with the raw amino-acid sequence, 144 residues long: Kunitz-type elastase inhibitor BrEI (144 aa).

N38 carries an N-linked (GlcNAc...) asparagine glycan. An intrachain disulfide couples C41 to C88.

It belongs to the leguminous Kunitz-type inhibitor family.

Its function is as follows. Inhibitor of porcine pancreatic elastase with a Ki of 27 nM. Does not inhibit human neutrophil elastase, bovine trypsin, human plasma kallikrein or porcine pancreatic kallikrein. This is Kunitz-type elastase inhibitor BrEI from Bauhinia rufa (Orchid tree).